Consider the following 574-residue polypeptide: ATP-grasp enzyme fsqD (574 aa).

An ATP-grasp domain is found at 234–462 (NKFLTSKYVG…YWGLAAVLGV (229 aa)). 263 to 318 (ALPYPLIVKPCDGWSSEGVSRVESPDAFPAAVKSIDTSRHGTEFVMEPYCDGPEVD) provides a ligand contact to ATP. Residues glutamate 394, glutamate 431, and asparagine 433 each coordinate Mg(2+). Mn(2+) is bound by residues glutamate 394, glutamate 431, and asparagine 433.

The cofactor is Mg(2+). Mn(2+) serves as cofactor.

The protein operates within secondary metabolite biosynthesis. In terms of biological role, ATP-grasp enzyme; part of the gene cluster that mediates the biosynthesis of the isoquinoline alkaloids fumisoquin A, fumisoquin B and fumisoquin C; as well as small amounts of fumipyrrole as a shunt metabolite. The products of the cluster lead to a brown coloration and are important for growth and conidiation. The nonribosomal peptide synthetase-like protein fsqF, which lacks a canonical condensation domain, is required for addition of a serine-derived dehydroalanine moiety to activated tyrosine but is not essential for the subsequent steps leading to isoquinoline formation. A different enzyme, most likely the ATP-grasp enzyme fsqD, is responsible for activation of tyrosine. Three additional enzymes encoded by the fsq cluster, the N-methyltransferase fsqC, the phenol 2-monooxygenase fsqG and the FAD-dependent oxidase fsqB, catalyze the formation of the isoquinoline ring system in the fumisoquins. FsqB converts the fspF thiolation domain-bound (2S,4S,5S)-2-amino-6-(3,4-dihydroxyphenyl)-4-hydroxy-5-(methylamino)hexanoyl into isoquinoline. The cyclization most likely proceeds via a two-step mechanism, beginning with FAD-dependent oxidation of the methyl group to an iminium species followed by electrophilic attack on the deprotonated phenol. The chain is ATP-grasp enzyme fsqD from Aspergillus fumigatus (strain ATCC MYA-4609 / CBS 101355 / FGSC A1100 / Af293) (Neosartorya fumigata).